A 337-amino-acid chain; its full sequence is PHD finger protein 11 (337 aa).

Residues 25-61 form a C2HC pre-PHD-type zinc finger; it reads KRTCALCPEGHEWSQIYFSPSGNIVAHENCLLYSSGL. The segment at 91–143 adopts a PHD-type zinc-finger fold; the sequence is LKCSFCNKGGATVGCDLWFCKKSYHYVCAKKDQAILQVDGNHGTYKLFCPEHS. 2 disordered regions span residues 145–196 and 301–337; these read EQEE…HGHT and GDLD…GDSL. Residues 187–196 show a composition bias toward basic and acidic residues; the sequence is HMTEEPHGHT. 2 stretches are compositionally biased toward polar residues: residues 301 to 312 and 323 to 337; these read GDLDCSSSTSGS and SQES…GDSL.

In terms of assembly, interacts with BRCA1 and RELA.

The protein localises to the nucleus. Functionally, positive regulator of Th1-type cytokine gene expression. This chain is PHD finger protein 11 (Phf11), found in Mus musculus (Mouse).